Consider the following 259-residue polypeptide: UPF0246 protein PA14_18590 (259 aa).

This sequence belongs to the UPF0246 family.

The sequence is that of UPF0246 protein PA14_18590 from Pseudomonas aeruginosa (strain UCBPP-PA14).